The chain runs to 420 residues: Cell division protein FtsA (420 aa).

This sequence belongs to the FtsA/MreB family. As to quaternary structure, self-interacts. Interacts with FtsZ.

It localises to the cell inner membrane. Functionally, cell division protein that is involved in the assembly of the Z ring. May serve as a membrane anchor for the Z ring. The sequence is that of Cell division protein FtsA from Escherichia coli O157:H7.